A 238-amino-acid chain; its full sequence is uncharacterized protein (238 aa).

Residues 10–33 (TLLALMISLSLSSLLLLSISHFYV) traverse the membrane as a helical segment.

The protein resides in the membrane. This is an uncharacterized protein from Haemophilus influenzae (strain ATCC 51907 / DSM 11121 / KW20 / Rd).